The following is a 389-amino-acid chain: Leucine aminopeptidase 1 (389 aa).

Residues Met-1 to Ala-18 form the signal peptide. The propeptide occupies Ala-19–Ser-89. Asn-99 carries an N-linked (GlcNAc...) asparagine glycan. Zn(2+)-binding residues include His-188, Asp-207, Glu-246, and Asp-273. A disulfide bridge links Cys-322 with Cys-326. His-355 lines the Zn(2+) pocket.

It belongs to the peptidase M28 family. M28E subfamily. As to quaternary structure, monomer. The cofactor is Zn(2+).

Its subcellular location is the secreted. Functionally, extracellular aminopeptidase that allows assimilation of proteinaceous substrates. The protein is Leucine aminopeptidase 1 (lap1) of Pyrenophora teres f. teres (strain 0-1) (Barley net blotch fungus).